We begin with the raw amino-acid sequence, 307 residues long: ATP synthase gamma chain (307 aa).

Belongs to the ATPase gamma chain family. In terms of assembly, F-type ATPases have 2 components, CF(1) - the catalytic core - and CF(0) - the membrane proton channel. CF(1) has five subunits: alpha(3), beta(3), gamma(1), delta(1), epsilon(1). CF(0) has three main subunits: a, b and c.

The protein resides in the cell membrane. Produces ATP from ADP in the presence of a proton gradient across the membrane. The gamma chain is believed to be important in regulating ATPase activity and the flow of protons through the CF(0) complex. In Bifidobacterium longum (strain DJO10A), this protein is ATP synthase gamma chain.